Reading from the N-terminus, the 544-residue chain is Probable protein kinase UbiB (544 aa).

A Protein kinase domain is found at 123–501; the sequence is DFDIEPLASA…KRQQATGKFL (379 aa). ATP-binding positions include 129 to 137 and Lys-152; that span reads LASASIAQV. Asp-287 acts as the Proton acceptor in catalysis. The chain crosses the membrane as a helical span at residues 500–520; that stretch reads FLFGVGATLVVCSAILVSSPY.

It belongs to the ABC1 family. UbiB subfamily.

Its subcellular location is the cell inner membrane. It participates in cofactor biosynthesis; ubiquinone biosynthesis [regulation]. Functionally, is probably a protein kinase regulator of UbiI activity which is involved in aerobic coenzyme Q (ubiquinone) biosynthesis. The protein is Probable protein kinase UbiB of Vibrio atlanticus (strain LGP32) (Vibrio splendidus (strain Mel32)).